Consider the following 382-residue polypeptide: Mannitol-1-phosphate 5-dehydrogenase (382 aa).

Residue 3–14 (ALHFGAGNIGRG) coordinates NAD(+).

This sequence belongs to the mannitol dehydrogenase family.

It carries out the reaction D-mannitol 1-phosphate + NAD(+) = beta-D-fructose 6-phosphate + NADH + H(+). The polypeptide is Mannitol-1-phosphate 5-dehydrogenase (Salmonella newport (strain SL254)).